Reading from the N-terminus, the 921-residue chain is DNA mismatch repair protein MutS 1 (921 aa).

619–626 (GPNMSGKS) provides a ligand contact to ATP. Residues 837–887 (FRDGAAQSGGAAAGSTAEPVATDGDPEHAPGEAAAEGPKGDERAASLDSET) form a disordered region. Positions 840 to 853 (GAAQSGGAAAGSTA) are enriched in low complexity.

Belongs to the DNA mismatch repair MutS family.

Functionally, this protein is involved in the repair of mismatches in DNA. It is possible that it carries out the mismatch recognition step. This protein has a weak ATPase activity. The protein is DNA mismatch repair protein MutS 1 of Haloarcula marismortui (strain ATCC 43049 / DSM 3752 / JCM 8966 / VKM B-1809) (Halobacterium marismortui).